A 61-amino-acid polypeptide reads, in one-letter code: Alpha-conotoxin-like Sm1.1 (61 aa).

The first 16 residues, 1 to 16 (MFTVFLLVVLATTVVS), serve as a signal peptide directing secretion. The propeptide occupies 17-43 (FPSDRASDGRDDEAKDERSDMHESGRK). A disordered region spans residues 19 to 46 (SDRASDGRDDEAKDERSDMHESGRKGRG). A compositionally biased stretch (basic and acidic residues) spans 21-42 (RASDGRDDEAKDERSDMHESGR). 2 disulfide bridges follow: Cys-48–Cys-53 and Cys-49–Cys-59. At Pro-55 the chain carries 4-hydroxyproline; partial. Cys-59 carries the post-translational modification Cysteine amide.

The protein belongs to the conotoxin A superfamily. In terms of tissue distribution, expressed by the venom duct.

The protein localises to the secreted. Functionally, alpha-conotoxins act on postsynaptic membranes, they bind to the nicotinic acetylcholine receptors (nAChR) and thus inhibit them. The chain is Alpha-conotoxin-like Sm1.1 from Conus stercusmuscarum (Fly-specked cone).